The following is a 711-amino-acid chain: Ribosomal RNA large subunit methyltransferase K/L (711 aa).

The THUMP domain occupies 42-153; the sequence is DAQRAVLWSR…KGRATISVDL (112 aa).

The protein belongs to the methyltransferase superfamily. RlmKL family.

Its subcellular location is the cytoplasm. It catalyses the reaction guanosine(2445) in 23S rRNA + S-adenosyl-L-methionine = N(2)-methylguanosine(2445) in 23S rRNA + S-adenosyl-L-homocysteine + H(+). It carries out the reaction guanosine(2069) in 23S rRNA + S-adenosyl-L-methionine = N(2)-methylguanosine(2069) in 23S rRNA + S-adenosyl-L-homocysteine + H(+). In terms of biological role, specifically methylates the guanine in position 2445 (m2G2445) and the guanine in position 2069 (m7G2069) of 23S rRNA. This is Ribosomal RNA large subunit methyltransferase K/L from Xanthomonas oryzae pv. oryzae (strain KACC10331 / KXO85).